The primary structure comprises 162 residues: Large ribosomal subunit protein bL17 (162 aa).

The segment at 126–162 is disordered; sequence ATAKKATRTRRSKKSAAATEAPAAPAAETTEEAPKAE. A compositionally biased stretch (basic residues) spans 130 to 139; that stretch reads KATRTRRSKK. The segment covering 140–153 has biased composition (low complexity); the sequence is SAAATEAPAAPAAE.

The protein belongs to the bacterial ribosomal protein bL17 family. As to quaternary structure, part of the 50S ribosomal subunit. Contacts protein L32.

In Phocaeicola vulgatus (strain ATCC 8482 / DSM 1447 / JCM 5826 / CCUG 4940 / NBRC 14291 / NCTC 11154) (Bacteroides vulgatus), this protein is Large ribosomal subunit protein bL17.